The chain runs to 968 residues: Bifunctional glyoxylate cycle protein (968 aa).

Positions 1 to 443 (MSSAAKNFYQ…AVASQDEEIL (443 aa)) are isocitrate lyase. A malate synthase region spans residues 444-968 (SLTAQNVAGD…AYDRLVSEGY (525 aa)). Arg-601 acts as the Proton acceptor in catalysis. Catalysis depends on Asp-881, which acts as the Proton donor.

This sequence in the N-terminal section; belongs to the isocitrate lyase/PEP mutase superfamily. Isocitrate lyase family. In the C-terminal section; belongs to the malate synthase family. As to expression, intestinal and body wall muscle cells.

It catalyses the reaction D-threo-isocitrate = glyoxylate + succinate. It carries out the reaction glyoxylate + acetyl-CoA + H2O = (S)-malate + CoA + H(+). The protein operates within carbohydrate metabolism; glyoxylate cycle; (S)-malate from isocitrate: step 1/2. It participates in carbohydrate metabolism; glyoxylate cycle; (S)-malate from isocitrate: step 2/2. The protein is Bifunctional glyoxylate cycle protein (icl-1) of Caenorhabditis elegans.